The following is a 335-amino-acid chain: Galactosylgalactosylxylosylprotein 3-beta-glucuronosyltransferase 3 (335 aa).

Residues 1-7 (MKLKLKN) lie on the Cytoplasmic side of the membrane. The helical; Signal-anchor for type II membrane protein transmembrane segment at 8 to 28 (VFLAYFLVSIAGLLYALVQLG) threads the bilayer. The Lumenal segment spans residues 29–335 (QPCDCLPPLR…GQGSDPAIEV (307 aa)). Asp196 lines the Mn(2+) pocket. Residue Glu281 is the Proton acceptor of the active site. The N-linked (GlcNAc...) asparagine glycan is linked to Asn300. Positions 312-322 (EKPKMKQEEQL) are enriched in basic and acidic residues. The tract at residues 312-335 (EKPKMKQEEQLQRQGQGSDPAIEV) is disordered.

Belongs to the glycosyltransferase 43 family. Homodimer; disulfide-linked. Interacts with PXYLP1; the interaction increases the 2-phosphoxylose phosphatase activity of PXYLP1 during completion of linkage region formation in a B3GAT3-mediated manner. The cofactor is Mn(2+). Post-translationally, N-glycosylated. As to expression, liver, brain and heart. Moderate expression seen in lung, skeletal muscle, kidney and testis.

Its subcellular location is the golgi apparatus membrane. It is found in the golgi apparatus. The protein resides in the cis-Golgi network. It carries out the reaction 3-O-(beta-D-galactosyl-(1-&gt;3)-beta-D-galactosyl-(1-&gt;4)-beta-D-xylosyl)-L-seryl-[protein] + UDP-alpha-D-glucuronate = 3-O-(beta-D-GlcA-(1-&gt;3)-beta-D-Gal-(1-&gt;3)-beta-D-Gal-(1-&gt;4)-beta-D-Xyl)-L-seryl-[protein] + UDP + H(+). The protein operates within protein modification; protein glycosylation. Functionally, glycosaminoglycans biosynthesis. Involved in forming the linkage tetrasaccharide present in heparan sulfate and chondroitin sulfate. Transfers a glucuronic acid moiety from the uridine diphosphate-glucuronic acid (UDP-GlcUA) to the common linkage region trisaccharide Gal-beta-1,3-Gal-beta-1,4-Xyl covalently bound to a Ser residue at the glycosaminylglycan attachment site of proteoglycans. Can also play a role in the biosynthesis of l2/HNK-1 carbohydrate epitope on glycoproteins. Highest activity seen with Gal-beta-1,3-Gal-beta-O-R (where R=naphthalenemethanol or benzyl alcohol). Stimulates 2-phosphoxylose phosphatase activity of PXYLP1 in presence of uridine diphosphate-glucuronic acid (UDP-GlcUA) during completion of linkage region formation. The polypeptide is Galactosylgalactosylxylosylprotein 3-beta-glucuronosyltransferase 3 (B3GAT3) (Cricetulus griseus (Chinese hamster)).